The sequence spans 317 residues: Acetyl-coenzyme A carboxylase carboxyl transferase subunit alpha (317 aa).

A CoA carboxyltransferase C-terminal domain is found at 32–293 (NLSEEIARLE…KRLLTSELQA (262 aa)).

Belongs to the AccA family. In terms of assembly, acetyl-CoA carboxylase is a heterohexamer composed of biotin carboxyl carrier protein (AccB), biotin carboxylase (AccC) and two subunits each of ACCase subunit alpha (AccA) and ACCase subunit beta (AccD).

The protein localises to the cytoplasm. The enzyme catalyses N(6)-carboxybiotinyl-L-lysyl-[protein] + acetyl-CoA = N(6)-biotinyl-L-lysyl-[protein] + malonyl-CoA. The protein operates within lipid metabolism; malonyl-CoA biosynthesis; malonyl-CoA from acetyl-CoA: step 1/1. Functionally, component of the acetyl coenzyme A carboxylase (ACC) complex. First, biotin carboxylase catalyzes the carboxylation of biotin on its carrier protein (BCCP) and then the CO(2) group is transferred by the carboxyltransferase to acetyl-CoA to form malonyl-CoA. The protein is Acetyl-coenzyme A carboxylase carboxyl transferase subunit alpha of Legionella pneumophila (strain Paris).